A 121-amino-acid chain; its full sequence is Pro-glucagon (121 aa).

An N-terminal signal peptide occupies residues 1 to 21; the sequence is MKGAQYLAGLLLLLFVQNSIC. The propeptide occupies 80-85; that stretch reads SNGGSA.

The protein belongs to the glucagon family.

Its subcellular location is the secreted. Functionally, plays a key role in glucose metabolism and homeostasis. Regulates blood glucose by increasing gluconeogenesis and decreasing glycolysis. This chain is Pro-glucagon (gcg), found in Carassius auratus (Goldfish).